The chain runs to 95 residues: uncharacterized protein (95 aa).

A compositionally biased stretch (low complexity) spans 1–12; the sequence is MQNFMNNLSGGS. Positions 1–27 are disordered; that stretch reads MQNFMNNLSGGSNKEGGEKSNDFLSSA.

This is an uncharacterized protein from Schizosaccharomyces pombe (strain 972 / ATCC 24843) (Fission yeast).